A 257-amino-acid polypeptide reads, in one-letter code: 3-dehydroquinate dehydratase (257 aa).

3-dehydroquinate-binding positions include 50–52 (EWR) and Arg86. The active-site Proton donor/acceptor is the His147. Lys174 functions as the Schiff-base intermediate with substrate in the catalytic mechanism. 3-dehydroquinate-binding residues include Arg216, Ser235, and Gln239.

Belongs to the type-I 3-dehydroquinase family. In terms of assembly, homodimer.

The catalysed reaction is 3-dehydroquinate = 3-dehydroshikimate + H2O. The protein operates within metabolic intermediate biosynthesis; chorismate biosynthesis; chorismate from D-erythrose 4-phosphate and phosphoenolpyruvate: step 3/7. Involved in the third step of the chorismate pathway, which leads to the biosynthesis of aromatic amino acids. Catalyzes the cis-dehydration of 3-dehydroquinate (DHQ) and introduces the first double bond of the aromatic ring to yield 3-dehydroshikimate. The sequence is that of 3-dehydroquinate dehydratase from Geobacillus kaustophilus (strain HTA426).